The sequence spans 418 residues: Serine hydroxymethyltransferase (418 aa).

Residues L121 and 125–127 (GHL) each bind (6S)-5,6,7,8-tetrahydrofolate. At K230 the chain carries N6-(pyridoxal phosphate)lysine. A (6S)-5,6,7,8-tetrahydrofolate-binding site is contributed by 356-358 (SPF).

The protein belongs to the SHMT family. As to quaternary structure, homodimer. Pyridoxal 5'-phosphate serves as cofactor.

Its subcellular location is the cytoplasm. The enzyme catalyses (6R)-5,10-methylene-5,6,7,8-tetrahydrofolate + glycine + H2O = (6S)-5,6,7,8-tetrahydrofolate + L-serine. The protein operates within one-carbon metabolism; tetrahydrofolate interconversion. It participates in amino-acid biosynthesis; glycine biosynthesis; glycine from L-serine: step 1/1. Catalyzes the reversible interconversion of serine and glycine with tetrahydrofolate (THF) serving as the one-carbon carrier. This reaction serves as the major source of one-carbon groups required for the biosynthesis of purines, thymidylate, methionine, and other important biomolecules. Also exhibits THF-independent aldolase activity toward beta-hydroxyamino acids, producing glycine and aldehydes, via a retro-aldol mechanism. The polypeptide is Serine hydroxymethyltransferase (Shewanella piezotolerans (strain WP3 / JCM 13877)).